Here is a 465-residue protein sequence, read N- to C-terminus: Kynureninase (465 aa).

Residues Leu-116, Thr-117, 144-147, Asp-231, His-234, and Tyr-256 each bind pyridoxal 5'-phosphate; that span reads FPSD. Lys-257 bears the N6-(pyridoxal phosphate)lysine mark. The pyridoxal 5'-phosphate site is built by Trp-291 and Asn-319.

The protein belongs to the kynureninase family. Homodimer. It depends on pyridoxal 5'-phosphate as a cofactor.

Its subcellular location is the cytoplasm. It carries out the reaction L-kynurenine + H2O = anthranilate + L-alanine + H(+). The catalysed reaction is 3-hydroxy-L-kynurenine + H2O = 3-hydroxyanthranilate + L-alanine + H(+). It participates in amino-acid degradation; L-kynurenine degradation; L-alanine and anthranilate from L-kynurenine: step 1/1. It functions in the pathway cofactor biosynthesis; NAD(+) biosynthesis; quinolinate from L-kynurenine: step 2/3. Functionally, catalyzes the cleavage of L-kynurenine (L-Kyn) and L-3-hydroxykynurenine (L-3OHKyn) into anthranilic acid (AA) and 3-hydroxyanthranilic acid (3-OHAA), respectively. The protein is Kynureninase of Scheffersomyces stipitis (strain ATCC 58785 / CBS 6054 / NBRC 10063 / NRRL Y-11545) (Yeast).